The sequence spans 362 residues: G-protein coupled receptor 4 (362 aa).

The Extracellular portion of the chain corresponds to 1–8 (MGNRTLEG). An N-linked (GlcNAc...) asparagine glycan is attached at asparagine 3. Residues 9 to 45 (CHVDSRMDHLFPPSLYIFVIGVGLPTNCLALWAAYRQ) form a helical membrane-spanning segment. Cystine bridges form between cysteine 9–cysteine 258 and cysteine 90–cysteine 168. The Cytoplasmic portion of the chain corresponds to 46 to 49 (VRQR). Residues 50-80 (NELGVYLMNLSIADLLYICTLPLWVDYFLHH) form a helical membrane-spanning segment. Residues 81 to 85 (DNWIH) are Extracellular-facing. A helical membrane pass occupies residues 86-121 (GPGSCKLFGFIFYTNIYISIAFLCCISVDRYLAVAH). The Cytoplasmic portion of the chain corresponds to 122-129 (PLRFARLR). A helical membrane pass occupies residues 130–156 (RVKTAVAVSSVVWATELGANSAPLFHD). The Extracellular segment spans residues 157 to 172 (ELFRDRYNHTFCFEKF). The segment at 157-172 (ELFRDRYNHTFCFEKF) is extracellular loop 2 (ECL2). The N-linked (GlcNAc...) asparagine glycan is linked to asparagine 164. A helical transmembrane segment spans residues 173–210 (PMEGWVAWMNLYRVFVGFLFPWALMLLSYRGILRAVRG). The Cytoplasmic segment spans residues 211–214 (SVST). The helical transmembrane segment at 215 to 250 (ERQEKVKIKRLALSLIAIVLVCFAPYHVLLLSRSAV) threads the bilayer. Residues 251 to 260 (YLRRPRDCGF) lie on the Extracellular side of the membrane. A helical transmembrane segment spans residues 261–289 (EERVFSAYHSSLAFTSLNCVADPILYCLV). Topologically, residues 290–362 (NEGARSDVAK…VQLKMLPPAQ (73 aa)) are cytoplasmic.

The protein belongs to the G-protein coupled receptor 1 family.

It is found in the cell membrane. With respect to regulation, activated by a network of residues that connects an extracellular-facing cavity to Glu-145, a conserved charged residue buried in the transmembrane core of the receptor. Protonation likely drives conformational changes in extracellular loop 2 (ECL2), which stabilizes movement of transmembrane 3 (TM3) and a series of rearrangements that connect the extracellular-facing cavity to Glu-145, a residue only conserved in proton-sensing G-protein coupled receptors. Functionally, proton-sensing G-protein coupled receptor activated by extracellular pH, which is required to monitor pH changes and generate adaptive reactions. Activated by an optimal pH of 6.8-7.2. Ligand binding causes a conformation change that triggers signaling via guanine nucleotide-binding proteins (G proteins) and modulates the activity of downstream effectors, such as adenylate cyclase. GPR4 is mainly coupled to G(s) G proteins and mediates activation of adenylate cyclase activity. May also couple with G(q) and G(12)/G(13) G proteins. Acts as a key regulator of respiratory sensitivity to CO2/H(+) in brain retrotrapezoid nucleus neurons: acts by mediating detection of protons generated by the formation of carbonic acid in the blood, an important mechanism to impulse to breathe. Also acts as a regulator of acid secretion in the kidney collecting duct by maintaining acid-base homeostasis in the kidney. Acidosis-induced GPR4 activation increases paracellular gap formation and permeability of vascular endothelial cells, possibly through the G(12)/G(13)/Rho GTPase signaling pathway. The chain is G-protein coupled receptor 4 (GPR4) from Bos taurus (Bovine).